We begin with the raw amino-acid sequence, 57 residues long: Large ribosomal subunit protein bL32 (57 aa).

Residues 1–38 (MAVQQNKPTRSKRGMRRSHDALTAVTSLSVDKTSGEKH) form a disordered region.

The protein belongs to the bacterial ribosomal protein bL32 family.

This Escherichia coli O7:K1 (strain IAI39 / ExPEC) protein is Large ribosomal subunit protein bL32.